Consider the following 387-residue polypeptide: Succinyl-diaminopimelate desuccinylase (387 aa).

Position 73 (histidine 73) interacts with Zn(2+). The active site involves aspartate 75. Aspartate 106 is a binding site for Zn(2+). Residue glutamate 141 is the Proton acceptor of the active site. Zn(2+) is bound by residues glutamate 142, glutamate 170, and histidine 359.

Belongs to the peptidase M20A family. DapE subfamily. Homodimer. Zn(2+) is required as a cofactor. The cofactor is Co(2+).

It catalyses the reaction N-succinyl-(2S,6S)-2,6-diaminopimelate + H2O = (2S,6S)-2,6-diaminopimelate + succinate. Its pathway is amino-acid biosynthesis; L-lysine biosynthesis via DAP pathway; LL-2,6-diaminopimelate from (S)-tetrahydrodipicolinate (succinylase route): step 3/3. Catalyzes the hydrolysis of N-succinyl-L,L-diaminopimelic acid (SDAP), forming succinate and LL-2,6-diaminopimelate (DAP), an intermediate involved in the bacterial biosynthesis of lysine and meso-diaminopimelic acid, an essential component of bacterial cell walls. This is Succinyl-diaminopimelate desuccinylase from Methylorubrum populi (strain ATCC BAA-705 / NCIMB 13946 / BJ001) (Methylobacterium populi).